We begin with the raw amino-acid sequence, 155 residues long: S-ribosylhomocysteine lyase (155 aa).

Residues H57, H61, and C124 each coordinate Fe cation.

This sequence belongs to the LuxS family. Homodimer. The cofactor is Fe cation.

The enzyme catalyses S-(5-deoxy-D-ribos-5-yl)-L-homocysteine = (S)-4,5-dihydroxypentane-2,3-dione + L-homocysteine. Involved in the synthesis of autoinducer 2 (AI-2) which is secreted by bacteria and is used to communicate both the cell density and the metabolic potential of the environment. The regulation of gene expression in response to changes in cell density is called quorum sensing. Catalyzes the transformation of S-ribosylhomocysteine (RHC) to homocysteine (HC) and 4,5-dihydroxy-2,3-pentadione (DPD). The protein is S-ribosylhomocysteine lyase of Listeria monocytogenes serotype 4b (strain CLIP80459).